Reading from the N-terminus, the 423-residue chain is G protein-activated inward rectifier potassium channel 2 (423 aa).

Residues 1-89 (MAKLTESMTN…IFTTLVDLKW (89 aa)) lie on the Cytoplasmic side of the membrane. Phosphoserine is present on residues S16 and S23. Residues 90 to 114 (RFNLLIFVMVYTVTWLFFGMIWWLI) traverse the membrane as a helical segment. The Extracellular segment spans residues 115–138 (AYIRGDMDHIEDPSWTPCVTNLNG). The segment at residues 139–150 (FVSAFLFSIETE) is an intramembrane region (helical; Pore-forming). An intramembrane region (pore-forming) is located at residues 151 to 157 (TTIGYGY). A Selectivity filter motif is present at residues 152–157 (TIGYGY). Residues 158-166 (RVITDKCPE) are Extracellular-facing. A helical membrane pass occupies residues 167–188 (GIILLLIQSVLGSIVNAFMVGC). Residues 189 to 423 (MFVKISQPKK…VANLENESKV (235 aa)) lie on the Cytoplasmic side of the membrane. The tract at residues 390–423 (NQHAELETEEEEKNLEEQTERNGDVANLENESKV) is disordered. Positions 420-423 (ESKV) match the PDZ-binding motif.

The protein belongs to the inward rectifier-type potassium channel (TC 1.A.2.1) family. KCNJ6 subfamily. In terms of assembly, associates with KCNJ3/GIRK1 or KCNJ5/GRIK4 to form a G-protein-activated heteromultimer pore-forming unit. The resulting inward current is much larger. Interacts (via PDZ-binding motif) with SNX27 (via PDZ domain); the interaction is required when endocytosed to prevent degradation in lysosomes and promote recycling to the plasma membrane. In terms of tissue distribution, most abundant in cerebellum, and to a lesser degree in islets and exocrine pancreas.

The protein resides in the membrane. It catalyses the reaction K(+)(in) = K(+)(out). Its activity is regulated as follows. Activated by phosphatidylinositol 4,5 biphosphate (PtdIns(4,5)P2). Inward rectifier potassium channels are characterized by a greater tendency to allow potassium to flow into the cell rather than out of it. Their voltage dependence is regulated by the concentration of extracellular potassium; as external potassium is raised, the voltage range of the channel opening shifts to more positive voltages. The inward rectification is mainly due to the blockage of outward current by internal magnesium. This potassium channel may be involved in the regulation of insulin secretion by glucose and/or neurotransmitters acting through G-protein-coupled receptors. This chain is G protein-activated inward rectifier potassium channel 2 (KCNJ6), found in Homo sapiens (Human).